A 359-amino-acid chain; its full sequence is NADH-quinone oxidoreductase subunit H (359 aa).

8 helical membrane-spanning segments follow: residues 16 to 36, 94 to 114, 128 to 148, 167 to 187, 205 to 225, 261 to 281, 296 to 316, and 331 to 351; these read IWPA…AVLA, GLFI…WAVI, GLLF…IAGW, VSYE…SGSL, GLTF…VYFI, FFLA…LLFL, IPGW…FLWV, and LGWK…GAWM.

This sequence belongs to the complex I subunit 1 family. NDH-1 is composed of 14 different subunits. Subunits NuoA, H, J, K, L, M, N constitute the membrane sector of the complex.

Its subcellular location is the cell inner membrane. The catalysed reaction is a quinone + NADH + 5 H(+)(in) = a quinol + NAD(+) + 4 H(+)(out). NDH-1 shuttles electrons from NADH, via FMN and iron-sulfur (Fe-S) centers, to quinones in the respiratory chain. The immediate electron acceptor for the enzyme in this species is believed to be ubiquinone. Couples the redox reaction to proton translocation (for every two electrons transferred, four hydrogen ions are translocated across the cytoplasmic membrane), and thus conserves the redox energy in a proton gradient. This subunit may bind ubiquinone. In Polaromonas naphthalenivorans (strain CJ2), this protein is NADH-quinone oxidoreductase subunit H.